Here is a 417-residue protein sequence, read N- to C-terminus: Serine hydroxymethyltransferase (417 aa).

Residues leucine 112 and 116–118 (GHL) each bind (6S)-5,6,7,8-tetrahydrofolate. Lysine 221 is subject to N6-(pyridoxal phosphate)lysine. Glutamate 247 contributes to the (6S)-5,6,7,8-tetrahydrofolate binding site.

The protein belongs to the SHMT family. Homodimer. Requires pyridoxal 5'-phosphate as cofactor.

It localises to the cytoplasm. The catalysed reaction is (6R)-5,10-methylene-5,6,7,8-tetrahydrofolate + glycine + H2O = (6S)-5,6,7,8-tetrahydrofolate + L-serine. The protein operates within one-carbon metabolism; tetrahydrofolate interconversion. It participates in amino-acid biosynthesis; glycine biosynthesis; glycine from L-serine: step 1/1. In terms of biological role, catalyzes the reversible interconversion of serine and glycine with tetrahydrofolate (THF) serving as the one-carbon carrier. This reaction serves as the major source of one-carbon groups required for the biosynthesis of purines, thymidylate, methionine, and other important biomolecules. Also exhibits THF-independent aldolase activity toward beta-hydroxyamino acids, producing glycine and aldehydes, via a retro-aldol mechanism. In Borreliella afzelii (strain PKo) (Borrelia afzelii), this protein is Serine hydroxymethyltransferase.